The following is a 379-amino-acid chain: MNNTEYYERLGVDKNASQDEIKKAYRKMSKKYHPDLNKEEGAEEKYKEVQEAYETLSDEQKRAAYDQYGEAGANGGFGGGGFGGASGFSGFGGGSGGFGGFEDIFSSFFGGGGAQVNPNAPRQGDDLQYRINLKFEEAIFGVEKQVKYNREELCHTCGGSGAKAGTHPETCHKCGGRGQINVVRDTPLGRMQTQVTCDVCNGTGKEIKEKCETCHGSGHEKVAHTVKVTVPAGVETGQKMRLQGQGDAGVNGGPYGDLYVVFQVEASDKFERDGAEIYYKMPMDFVQAALGDEIEVPTVHGNVKLKIPAGTQTGANFRLKGKGAPKLRGSGNGDQYVIINIVTPKNLNQAQKEALQAFAKASGVEVSGSGKKGFFDKFK.

Residues 5-69 (EYYERLGVDK…QKRAAYDQYG (65 aa)) form the J domain. The CR-type zinc-finger motif lies at 141–223 (GVEKQVKYNR…CHGSGHEKVA (83 aa)). Residues Cys154, Cys157, Cys171, Cys174, Cys197, Cys200, Cys211, and Cys214 each coordinate Zn(2+). CXXCXGXG motif repeat units lie at residues 154 to 161 (CHTCGGSG), 171 to 178 (CHKCGGRG), 197 to 204 (CDVCNGTG), and 211 to 218 (CETCHGSG).

The protein belongs to the DnaJ family. As to quaternary structure, homodimer. Zn(2+) serves as cofactor.

The protein localises to the cytoplasm. Functionally, participates actively in the response to hyperosmotic and heat shock by preventing the aggregation of stress-denatured proteins and by disaggregating proteins, also in an autonomous, DnaK-independent fashion. Unfolded proteins bind initially to DnaJ; upon interaction with the DnaJ-bound protein, DnaK hydrolyzes its bound ATP, resulting in the formation of a stable complex. GrpE releases ADP from DnaK; ATP binding to DnaK triggers the release of the substrate protein, thus completing the reaction cycle. Several rounds of ATP-dependent interactions between DnaJ, DnaK and GrpE are required for fully efficient folding. Also involved, together with DnaK and GrpE, in the DNA replication of plasmids through activation of initiation proteins. In Lactococcus lactis subsp. lactis (strain IL1403) (Streptococcus lactis), this protein is Chaperone protein DnaJ.